The chain runs to 434 residues: Nicotinate phosphoribosyltransferase (434 aa).

At His242 the chain carries Phosphohistidine; by autocatalysis.

This sequence belongs to the NAPRTase family. Transiently phosphorylated on a His residue during the reaction cycle. Phosphorylation strongly increases the affinity for substrates and increases the rate of nicotinate D-ribonucleotide production. Dephosphorylation regenerates the low-affinity form of the enzyme, leading to product release.

The catalysed reaction is nicotinate + 5-phospho-alpha-D-ribose 1-diphosphate + ATP + H2O = nicotinate beta-D-ribonucleotide + ADP + phosphate + diphosphate. It participates in cofactor biosynthesis; NAD(+) biosynthesis; nicotinate D-ribonucleotide from nicotinate: step 1/1. Functionally, catalyzes the synthesis of beta-nicotinate D-ribonucleotide from nicotinate and 5-phospho-D-ribose 1-phosphate at the expense of ATP. The protein is Nicotinate phosphoribosyltransferase of Brucella canis (strain ATCC 23365 / NCTC 10854 / RM-666).